Reading from the N-terminus, the 196-residue chain is ATP-dependent Clp protease proteolytic subunit (196 aa).

Serine 99 (nucleophile) is an active-site residue. Residue histidine 124 is part of the active site.

This sequence belongs to the peptidase S14 family. Fourteen ClpP subunits assemble into 2 heptameric rings which stack back to back to give a disk-like structure with a central cavity, resembling the structure of eukaryotic proteasomes.

Its subcellular location is the cytoplasm. The catalysed reaction is Hydrolysis of proteins to small peptides in the presence of ATP and magnesium. alpha-casein is the usual test substrate. In the absence of ATP, only oligopeptides shorter than five residues are hydrolyzed (such as succinyl-Leu-Tyr-|-NHMec, and Leu-Tyr-Leu-|-Tyr-Trp, in which cleavage of the -Tyr-|-Leu- and -Tyr-|-Trp bonds also occurs).. Cleaves peptides in various proteins in a process that requires ATP hydrolysis. Has a chymotrypsin-like activity. Plays a major role in the degradation of misfolded proteins. The protein is ATP-dependent Clp protease proteolytic subunit of Helicobacter pylori (strain ATCC 700392 / 26695) (Campylobacter pylori).